Reading from the N-terminus, the 503-residue chain is Geissoschizine oxidase (503 aa).

Residues 7 to 27 (FSSPSFFFLLPFLFLLIKPLI) traverse the membrane as a helical segment. C441 is a heme binding site.

It belongs to the cytochrome P450 family. It depends on heme as a cofactor.

It localises to the membrane. It carries out the reaction (19E)-geissoschizine + reduced [NADPH--hemoprotein reductase] + O2 = akuammicine + formate + oxidized [NADPH--hemoprotein reductase] + H2O + H(+). The enzyme catalyses (19E)-geissoschizine + reduced [NADPH--hemoprotein reductase] + O2 = 3,17-didehydrostemmadenine + oxidized [NADPH--hemoprotein reductase] + 2 H2O. It catalyses the reaction 3,17-didehydrostemmadenine = 17-dehydropreakuammicine. It functions in the pathway alkaloid biosynthesis. Its function is as follows. Monooxygenase involved in the biosynthesis of curare monoterpene indole alkaloids (MIAs), natural products such as diaboline, a pharmacologically active compound used to regulate blood pressure. Curare alkaloids act as animal glycine receptor antagonists. Catalyzes the conversion of geissoschizine to dehydropreakuammicine by cyclization, which is spontaneously converted into akuammicine by aromatization. This Strychnos sp protein is Geissoschizine oxidase.